The following is a 125-amino-acid chain: Calcitonin receptor-stimulating peptide 1 (125 aa).

The N-terminal stretch at 1–25 is a signal peptide; sequence MGFWKFPPFLVLSILVLYQAGMFHA. Residues 26-77 constitute a propeptide that is removed on maturation; that stretch reads APFRSVFDGRFDPATLDEEESRLLLAAMVNDYEQMRARESEKAQKTEGSRIQ. Cys81 and Cys86 are oxidised to a cystine.

This sequence belongs to the calcitonin family.

The protein localises to the secreted. Its function is as follows. Stimulates cAMP production in porcine kidney cell line LLC-PK1 via the calcitonin receptor (CT) but not via the CT-like (CL) receptor. The sequence is that of Calcitonin receptor-stimulating peptide 1 (CRSP1) from Bos taurus (Bovine).